Consider the following 125-residue polypeptide: Phosphoribosyl-AMP cyclohydrolase (125 aa).

Aspartate 74 lines the Mg(2+) pocket. Cysteine 75 is a binding site for Zn(2+). Mg(2+) contacts are provided by aspartate 76 and aspartate 78. Zn(2+) is bound by residues cysteine 92 and cysteine 99.

It belongs to the PRA-CH family. As to quaternary structure, homodimer. Mg(2+) serves as cofactor. Requires Zn(2+) as cofactor.

It localises to the cytoplasm. The enzyme catalyses 1-(5-phospho-beta-D-ribosyl)-5'-AMP + H2O = 1-(5-phospho-beta-D-ribosyl)-5-[(5-phospho-beta-D-ribosylamino)methylideneamino]imidazole-4-carboxamide. It participates in amino-acid biosynthesis; L-histidine biosynthesis; L-histidine from 5-phospho-alpha-D-ribose 1-diphosphate: step 3/9. In terms of biological role, catalyzes the hydrolysis of the adenine ring of phosphoribosyl-AMP. This chain is Phosphoribosyl-AMP cyclohydrolase, found in Geobacter sulfurreducens (strain ATCC 51573 / DSM 12127 / PCA).